Here is a 182-residue protein sequence, read N- to C-terminus: Ribosome-recycling factor (182 aa).

It belongs to the RRF family.

It is found in the cytoplasm. Responsible for the release of ribosomes from messenger RNA at the termination of protein biosynthesis. May increase the efficiency of translation by recycling ribosomes from one round of translation to another. This Synechococcus sp. (strain WH7803) protein is Ribosome-recycling factor.